Here is a 180-residue protein sequence, read N- to C-terminus: Large ribosomal subunit protein uL6 (180 aa).

Belongs to the universal ribosomal protein uL6 family. In terms of assembly, part of the 50S ribosomal subunit.

Functionally, this protein binds to the 23S rRNA, and is important in its secondary structure. It is located near the subunit interface in the base of the L7/L12 stalk, and near the tRNA binding site of the peptidyltransferase center. This chain is Large ribosomal subunit protein uL6, found in Clostridium botulinum (strain Eklund 17B / Type B).